Here is an 809-residue protein sequence, read N- to C-terminus: WASP homolog-associated protein with actin, membranes and microtubules (809 aa).

Residues 1 to 260 form a mediates association with membranes region; that stretch reads MEDEQPDSLE…EVATLCKLDI (260 aa). A mediates interaction with microtubules region spans residues 261–630; the sequence is LKSLDEDDLG…FVPVGDQTHS (370 aa). 3 coiled-coil regions span residues 271-298, 384-479, and 512-542; these read PRRV…IQDI, ELEI…CAKR, and SIQM…LQRL. Disordered regions lie at residues 506–528, 546–571, 586–612, and 627–707; these read YSRQ…QKKK, KDKR…PSDL, IHPS…CQNC, and QTHS…FSCP. Positions 515-528 are enriched in basic and acidic residues; that stretch reads MKRDKIKEEEQKKK. Ser606 is subject to Phosphoserine. The segment at 631–809 is mediates actin nucleation; sequence KSSEELSLPP…DEQDPGQWDG (179 aa). A compositionally biased stretch (pro residues) spans 638-659; sequence LPPPPPPPPPPPPPPPPPPPPL. The segment covering 662–673 has biased composition (polar residues); the sequence is LSSSSQAATHQN. 2 WH2 domains span residues 709–727 and 739–756; these read SMDE…LRKV and INEH…LKKV. A disordered region spans residues 754–809; it reads KKVHPDLGPNPSSKPTSNRRTSDLERSIKAALQRIKRVSADSEEDSDEQDPGQWDG. Over residues 763–772 the composition is skewed to polar residues; the sequence is NPSSKPTSNR. The stretch at 770 to 797 forms a coiled coil; it reads SNRRTSDLERSIKAALQRIKRVSADSEE. Residues 794 to 803 are compositionally biased toward acidic residues; it reads DSEEDSDEQD. Ser795 bears the Phosphoserine mark.

In terms of assembly, interacts with ACTR3; indicative for an association with the ARP2/3 complex. Associates with microtubules; in vitro binds to tubulin heterodimer in a 1:1 stoichiometry; decorates microtubules with a repeat of 80 A along protofilaments. Interacts with RHOD (in GTP-bound form). Expressed in brain, lung, heart, colon and kidney (at protein level).

The protein localises to the cytoplasm. The protein resides in the endoplasmic reticulum-Golgi intermediate compartment. It is found in the cytoplasmic vesicle membrane. It localises to the golgi apparatus. Its subcellular location is the cis-Golgi network. In terms of biological role, acts as a nucleation-promoting factor (NPF) that stimulates Arp2/3-mediated actin polymerization both at the Golgi apparatus and along tubular membranes. Its activity in membrane tubulation requires F-actin and interaction with microtubules. Proposed to use coordinated actin-nucleating and microtubule-binding activities of distinct WHAMM molecules to drive membrane tubule elongation; when MT-bound can recruit and remodel membrane vesicles but is prevented to activate the Arp2/3 complex. Involved as a regulator of Golgi positioning and morphology. Participates in vesicle transport between the reticulum endoplasmic and the Golgi complex. Required for RhoD-dependent actin reorganization such as in cell adhesion and cell migration. The protein is WASP homolog-associated protein with actin, membranes and microtubules (WHAMM) of Homo sapiens (Human).